We begin with the raw amino-acid sequence, 318 residues long: tRNA dimethylallyltransferase (318 aa).

Position 13-20 (G13–T20) interacts with ATP. T15–T20 lines the substrate pocket. The tract at residues D38 to Q41 is interaction with substrate tRNA.

Belongs to the IPP transferase family. In terms of assembly, monomer. Mg(2+) serves as cofactor.

The enzyme catalyses adenosine(37) in tRNA + dimethylallyl diphosphate = N(6)-dimethylallyladenosine(37) in tRNA + diphosphate. Its function is as follows. Catalyzes the transfer of a dimethylallyl group onto the adenine at position 37 in tRNAs that read codons beginning with uridine, leading to the formation of N6-(dimethylallyl)adenosine (i(6)A). The sequence is that of tRNA dimethylallyltransferase from Bacillus pumilus (strain SAFR-032).